Consider the following 366-residue polypeptide: MASMAAVLTWALALLSAFSATQARKGFWDYFSQTSGDKGRVEQIHQQKMAREPATLKDSLEQDLNNMNKFLEKLRPLSGSEAPRLPQDPVGMRRQLQEELEEVKARLQPYMAEAHELVGWNLEGLRQQLKPYTMDLMEQVALRVQELQEQLRVVGEDTKAQLLGGVDEAWALLQGLQSRVVHHTGRFKELFHPYAESLVSGIGRHVQELHRSVAPHAPASPARLSRCVQVLSRKLTLKAKALHARIQQNLDQLREELSRAFAGTGTEEGAGPDPQMLSEEVRQRLQAFRQDTYLQIAAFTRAIDQETEEVQQQLAPPPPGHSAFAPEFQQTDSGKVLSKLQARLDDLWEDITHSLHDQGHSHLGDP.

An N-terminal signal peptide occupies residues 1–23 (MASMAAVLTWALALLSAFSATQA). Coiled-coil stretches lie at residues 54-157 (ATLK…VGED) and 236-262 (TLKA…RAFA). Threonine 55 carries the post-translational modification Phosphothreonine; by FAM20C. Serine 59 bears the Phosphoserine mark.

Belongs to the apolipoprotein A1/A4/E family. In terms of assembly, interacts with GPIHBP1. Interacts with SORL1; this interaction leads to APOA5 internalization and sorting either to lysosomes and degradation, or to the trans-Golgi network. Phosphorylated by FAM20C in the extracellular medium. Liver and plasma.

It localises to the secreted. The protein localises to the early endosome. Its subcellular location is the late endosome. The protein resides in the golgi apparatus. It is found in the trans-Golgi network. Its function is as follows. Minor apolipoprotein mainly associated with HDL and to a lesser extent with VLDL. May also be associated with chylomicrons. Important determinant of plasma triglyceride (TG) levels by both being a potent stimulator of apo-CII lipoprotein lipase (LPL) TG hydrolysis and an inhibitor of the hepatic VLDL-TG production rate (without affecting the VLDL-apoB production rate). Activates poorly lecithin:cholesterol acyltransferase (LCAT) and does not enhance efflux of cholesterol from macrophages. Binds heparin. The polypeptide is Apolipoprotein A-V (APOA5) (Homo sapiens (Human)).